Here is a 308-residue protein sequence, read N- to C-terminus: Ornithine carbamoyltransferase (308 aa).

Residues 57–60 (STRT), Gln84, Arg108, and 135–138 (HPCQ) each bind carbamoyl phosphate. L-ornithine-binding positions include Asn166, Asp224, and 228-229 (SM). Residues 264–265 (CL) and Arg292 each bind carbamoyl phosphate.

This sequence belongs to the aspartate/ornithine carbamoyltransferase superfamily. OTCase family.

Its subcellular location is the cytoplasm. It carries out the reaction carbamoyl phosphate + L-ornithine = L-citrulline + phosphate + H(+). Its pathway is amino-acid biosynthesis; L-arginine biosynthesis; L-arginine from L-ornithine and carbamoyl phosphate: step 1/3. In terms of biological role, reversibly catalyzes the transfer of the carbamoyl group from carbamoyl phosphate (CP) to the N(epsilon) atom of ornithine (ORN) to produce L-citrulline. This chain is Ornithine carbamoyltransferase, found in Ralstonia nicotianae (strain ATCC BAA-1114 / GMI1000) (Ralstonia solanacearum).